The chain runs to 141 residues: Hemoglobin subunit alpha-A (141 aa).

The region spanning 1–141 (VLSASDKTNV…VAKELTAKYR (141 aa)) is the Globin domain. His58 serves as a coordination point for O2. His87 serves as a coordination point for heme b.

Belongs to the globin family. In terms of assembly, heterotetramer of two alpha chains and two beta chains. As to expression, red blood cells.

In terms of biological role, involved in oxygen transport from the lung to the various peripheral tissues. The chain is Hemoglobin subunit alpha-A (HBAA) from Phalacrocorax carbo (Great cormorant).